A 1131-amino-acid polypeptide reads, in one-letter code: ATP-dependent helicase FUN30 (1131 aa).

The interval 1-70 (MSGSHSNDED…HTSKPLPSGS (70 aa)) is disordered. The span at 16–36 (PETSSPTKVASSSPLKPTSPT) shows a compositional bias: polar residues. The segment at 76 to 111 (VNLAREFPDFSQTLVQAVFKSNSFNLQSARERLTRL) is CUE-like region. Residues 114-141 (QRQNWTWNKNASPKKSETPPPVKKSLPL) are disordered. Residue Ser-232 is modified to Phosphoserine. Disordered regions lie at residues 242–273 (KYGRHANDNDEEEEESMMTDDDDASGDDYTES) and 327–350 (NDKDTEENASNKRKRRAAASANES). A compositionally biased stretch (acidic residues) spans 250–271 (NDEEEEESMMTDDDDASGDDYT). Residue Ser-369 is modified to Phosphoserine. Positions 400–533 (DLMNLGEDDD…GDDDDDDDDE (134 aa)) are disordered. The segment covering 405–416 (GEDDDDDNDDGN) has biased composition (acidic residues). A compositionally biased stretch (low complexity) spans 417-432 (NDNNNSNNNNTAGADA). The segment covering 433–442 (TSKEKEDTKA) has biased composition (basic and acidic residues). Residue Ser-451 is modified to Phosphoserine. Acidic residues predominate over residues 480-533 (EDEDDDVDLEAIDDELPQSEHEDDDYEEEDEDYNDEEEDVEYDDGDDDDDDDDE). Residues 584–752 (NLLYQNKMSC…MSLLEFIMPN (169 aa)) enclose the Helicase ATP-binding domain. 597-604 (DDMGLGKT) contacts ATP. A DEGH box motif is present at residues 703–706 (DEGH). One can recognise a Helicase C-terminal domain in the interval 953–1108 (ALKKLLKTII…EDKKSQDVLE (156 aa)).

This sequence belongs to the SNF2/RAD54 helicase family. As to quaternary structure, homodimer.

Its subcellular location is the nucleus. It localises to the chromosome. The catalysed reaction is ATP + H2O = ADP + phosphate + H(+). Functionally, DNA helicase that possesses intrinsic ATP-dependent nucleosome-remodeling activity and is both required for DNA repair and heterochromatin organization. Promotes DNA end resection of double-strand breaks (DSBs) following DNA damage: probably acts by weakening histone DNA interactions in nucleosomes flanking DSBs, facilitating single-stranded DNA (ssDNA) production by the EXO1 and SGS1 machinery. Promotes gene silencing at heterochromatin by regulating the chromatin structure within or around silent loci. Also required for heterochromatin organization at centromeres. This chain is ATP-dependent helicase FUN30 (FUN30), found in Saccharomyces cerevisiae (strain ATCC 204508 / S288c) (Baker's yeast).